The following is a 367-amino-acid chain: Dual specificity protein phosphatase 1 (367 aa).

In terms of domain architecture, Rhodanese spans 20–137; it reads GAAQCLLLDC…FSASCPELCS (118 aa). A Tyrosine-protein phosphatase domain is found at 173–314; the sequence is GPVEILSFLY…LLQFESQVLA (142 aa). The active-site Phosphocysteine intermediate is the Cys258. A phosphoserine; by MAPK1 and MAPK3 mark is found at Ser359 and Ser364.

This sequence belongs to the protein-tyrosine phosphatase family. Non-receptor class dual specificity subfamily. In terms of processing, phosphorylation at Ser-359 and Ser-364 by MAPK1/ERK2 and MAPK3/ERK1 reduces its rate of degradation. Post-translationally, 'Lys-48'-linked polyubiquitinated by NEURL3, leading to proteasomal degradation.

It localises to the nucleus. It carries out the reaction O-phospho-L-tyrosyl-[protein] + H2O = L-tyrosyl-[protein] + phosphate. It catalyses the reaction O-phospho-L-seryl-[protein] + H2O = L-seryl-[protein] + phosphate. The catalysed reaction is O-phospho-L-threonyl-[protein] + H2O = L-threonyl-[protein] + phosphate. In terms of biological role, dual specificity phosphatase that dephosphorylates MAP kinase MAPK1/ERK2 on both 'Thr-183' and 'Tyr-185', regulating its activity during the meiotic cell cycle. The chain is Dual specificity protein phosphatase 1 from Mus musculus (Mouse).